The sequence spans 512 residues: Putative ribose/galactose/methyl galactoside import ATP-binding protein 2 (512 aa).

ABC transporter domains are found at residues 14–251 and 262–507; these read IALT…VGRQ and TSGN…TQRE. 46–53 serves as a coordination point for ATP; sequence GENGAGKS.

It belongs to the ABC transporter superfamily. Carbohydrate importer 2 (CUT2) (TC 3.A.1.2) family.

It localises to the cell inner membrane. The catalysed reaction is D-ribose(out) + ATP + H2O = D-ribose(in) + ADP + phosphate + H(+). The enzyme catalyses D-galactose(out) + ATP + H2O = D-galactose(in) + ADP + phosphate + H(+). In terms of biological role, part of an ABC transporter complex involved in carbohydrate import. Could be involved in ribose, galactose and/or methyl galactoside import. Responsible for energy coupling to the transport system. This Burkholderia cenocepacia (strain HI2424) protein is Putative ribose/galactose/methyl galactoside import ATP-binding protein 2.